Reading from the N-terminus, the 478-residue chain is Ribulose bisphosphate carboxylase large chain (478 aa).

Residues 1 to 2 (MS) constitute a propeptide that is removed on maturation. Pro3 carries the N-acetylproline modification. Lys14 carries the post-translational modification N6,N6,N6-trimethyllysine. Residues Asn123 and Thr173 each contribute to the substrate site. The Proton acceptor role is filled by Lys175. Lys177 provides a ligand contact to substrate. Mg(2+) is bound by residues Lys201, Asp203, and Glu204. Lys201 carries the post-translational modification N6-carboxylysine. His294 (proton acceptor) is an active-site residue. Substrate is bound by residues Arg295, His327, and Ser379.

The protein belongs to the RuBisCO large chain family. Type I subfamily. In terms of assembly, heterohexadecamer of 8 large chains and 8 small chains; disulfide-linked. The disulfide link is formed within the large subunit homodimers. Mg(2+) serves as cofactor. In terms of processing, the disulfide bond which can form in the large chain dimeric partners within the hexadecamer appears to be associated with oxidative stress and protein turnover.

It localises to the plastid. It is found in the chloroplast. The enzyme catalyses 2 (2R)-3-phosphoglycerate + 2 H(+) = D-ribulose 1,5-bisphosphate + CO2 + H2O. It carries out the reaction D-ribulose 1,5-bisphosphate + O2 = 2-phosphoglycolate + (2R)-3-phosphoglycerate + 2 H(+). RuBisCO catalyzes two reactions: the carboxylation of D-ribulose 1,5-bisphosphate, the primary event in carbon dioxide fixation, as well as the oxidative fragmentation of the pentose substrate in the photorespiration process. Both reactions occur simultaneously and in competition at the same active site. This is Ribulose bisphosphate carboxylase large chain from Neurachne tenuifolia.